A 77-amino-acid polypeptide reads, in one-letter code: Protein OPG195 (77 aa).

The first 17 residues, 1 to 17 (MRSLIIVLLFPSIIYSM), serve as a signal peptide directing secretion.

This sequence belongs to the chordopoxvirinae B9 protein family.

The polypeptide is Protein OPG195 (OPG197) (Homo sapiens (Human)).